The primary structure comprises 90 residues: MKSASLILFVALVALTYARSYEDVKEEIKNEVEKEILDDLEEENDELDDNTQEVNDPRARRWRRIVRRIRVRPLLPYIPCIIQAYQTGKK.

The first 20 residues, 1–20, serve as a signal peptide directing secretion; the sequence is MKSASLILFVALVALTYARS. The propeptide occupies 21–59; the sequence is YEDVKEEIKNEVEKEILDDLEEENDELDDNTQEVNDPRA. T87 is subject to Threonine amide.

This sequence belongs to the arminin family. In terms of tissue distribution, expressed in entodermal epithelium along the body column.

The protein resides in the secreted. Its subcellular location is the target cell membrane. Its function is as follows. Antimicrobial peptide with a broad-spectrum antimicrobial activity. Keeps its antibacterial activity under a wide range of salt concentrations that mimic physiological conditions of human blood, which is surprising, since Hydra is an obligate freshwater animal with nearly no salt tolerance. Does not affect red blood cells. This chain is Arminin 45266, found in Hydra vulgaris (Hydra).